The following is a 160-amino-acid chain: Peptidyl-prolyl cis-trans isomerase CYP18-1 (160 aa).

The PPIase cyclophilin-type domain maps to valine 3–isoleucine 153.

It belongs to the cyclophilin-type PPIase family. As to expression, ubiquitous.

The protein resides in the cytoplasm. The enzyme catalyses [protein]-peptidylproline (omega=180) = [protein]-peptidylproline (omega=0). Functionally, PPIases accelerate the folding of proteins. It catalyzes the cis-trans isomerization of proline imidic peptide bonds in oligopeptides. This is Peptidyl-prolyl cis-trans isomerase CYP18-1 (CYP18-1) from Arabidopsis thaliana (Mouse-ear cress).